Here is a 306-residue protein sequence, read N- to C-terminus: Ornithine carbamoyltransferase (306 aa).

Carbamoyl phosphate is bound by residues 46–49 (STRT), Q73, R97, and 124–127 (HPTQ). Residues N156, D220, and 224–225 (SM) contribute to the L-ornithine site. Carbamoyl phosphate contacts are provided by residues 260–261 (CL) and R288.

The protein belongs to the aspartate/ornithine carbamoyltransferase superfamily. OTCase family.

Its subcellular location is the cytoplasm. It catalyses the reaction carbamoyl phosphate + L-ornithine = L-citrulline + phosphate + H(+). It participates in amino-acid degradation; L-arginine degradation via ADI pathway; carbamoyl phosphate from L-arginine: step 2/2. Reversibly catalyzes the transfer of the carbamoyl group from carbamoyl phosphate (CP) to the N(epsilon) atom of ornithine (ORN) to produce L-citrulline. This Campylobacter jejuni subsp. jejuni serotype O:6 (strain 81116 / NCTC 11828) protein is Ornithine carbamoyltransferase.